A 714-amino-acid chain; its full sequence is Polyribonucleotide nucleotidyltransferase (714 aa).

Residues Asp488 and Asp494 each coordinate Mg(2+). Residues 555-614 (PRIEVMNIPTDKIRDVIGSGGKVIREIVEKTGAKINIEDDGTVKIASSNGKEIEAAKKWI) enclose the KH domain. The S1 motif domain occupies 624-692 (GEIYEGTVVK…ERGKVRLSMK (69 aa)).

This sequence belongs to the polyribonucleotide nucleotidyltransferase family. The cofactor is Mg(2+).

It is found in the cytoplasm. The catalysed reaction is RNA(n+1) + phosphate = RNA(n) + a ribonucleoside 5'-diphosphate. Functionally, involved in mRNA degradation. Catalyzes the phosphorolysis of single-stranded polyribonucleotides processively in the 3'- to 5'-direction. The chain is Polyribonucleotide nucleotidyltransferase from Brucella abortus biovar 1 (strain 9-941).